We begin with the raw amino-acid sequence, 476 residues long: Protein DETOXIFICATION 1 (476 aa).

The next 12 helical transmembrane spans lie at 35–55, 66–86, 117–137, 146–166, 184–204, 208–228, 260–280, 289–309, 331–351, 370–390, 402–422, and 433–453; these read AAPM…SVMV, GVAL…CGLV, IPIC…LISL, IAGS…IVIP, AVTT…LFGL, GPAM…SCYV, AAMI…SGLL, VLSI…GVAA, VLAG…LLFT, VADL…TAVL, IGAW…GIYL, and LWCG…IVTA.

The protein belongs to the multi antimicrobial extrusion (MATE) (TC 2.A.66.1) family. Ubiquitous. Highest expression in flowers and stems.

It localises to the cell membrane. In terms of biological role, efflux carrier for plant-derived alkaloids, antibiotics, heavy metal and other toxic compounds. Involved in cadmium detoxification. Requires probably a proton-motive force for the efflux. The sequence is that of Protein DETOXIFICATION 1 from Arabidopsis thaliana (Mouse-ear cress).